Reading from the N-terminus, the 409-residue chain is Elongation factor Tu (409 aa).

A tr-type G domain is found at 10-214; the sequence is KPHVNIGTIG…AVDSYIPDPE (205 aa). The tract at residues 19 to 26 is G1; that stretch reads GHVDHGKT. 19–26 contacts GTP; sequence GHVDHGKT. Residue T26 participates in Mg(2+) binding. A G2 region spans residues 60–64; sequence GITIN. The G3 stretch occupies residues 81–84; it reads DCPG. Residues 81 to 85 and 136 to 139 contribute to the GTP site; these read DCPGH and NKED. The interval 136 to 139 is G4; sequence NKED. The segment at 174-176 is G5; that stretch reads SGL.

It belongs to the TRAFAC class translation factor GTPase superfamily. Classic translation factor GTPase family. EF-Tu/EF-1A subfamily. Monomer.

The protein resides in the cytoplasm. The catalysed reaction is GTP + H2O = GDP + phosphate + H(+). GTP hydrolase that promotes the GTP-dependent binding of aminoacyl-tRNA to the A-site of ribosomes during protein biosynthesis. In Trichormus variabilis (strain ATCC 29413 / PCC 7937) (Anabaena variabilis), this protein is Elongation factor Tu.